A 181-amino-acid polypeptide reads, in one-letter code: Probable integrase/recombinase YoeC (181 aa).

One can recognise a Tyr recombinase domain in the interval Ile-3–Lys-176. Catalysis depends on residues Arg-40, Lys-64, His-128, Arg-131, and His-154. Catalysis depends on Tyr-163, which acts as the O-(3'-phospho-DNA)-tyrosine intermediate.

Belongs to the 'phage' integrase family.

The polypeptide is Probable integrase/recombinase YoeC (yoeC) (Bacillus subtilis (strain 168)).